Consider the following 184-residue polypeptide: Large ribosomal subunit protein uL6 (184 aa).

It belongs to the universal ribosomal protein uL6 family. In terms of assembly, part of the 50S ribosomal subunit.

In terms of biological role, this protein binds to the 23S rRNA, and is important in its secondary structure. It is located near the subunit interface in the base of the L7/L12 stalk, and near the tRNA binding site of the peptidyltransferase center. In Pyrococcus abyssi (strain GE5 / Orsay), this protein is Large ribosomal subunit protein uL6.